Here is a 207-residue protein sequence, read N- to C-terminus: Ribosomal RNA large subunit methyltransferase E (207 aa).

The S-adenosyl-L-methionine site is built by Gly60, Trp62, Asp80, Asp96, and Asp121. The active-site Proton acceptor is Lys161.

It belongs to the class I-like SAM-binding methyltransferase superfamily. RNA methyltransferase RlmE family.

Its subcellular location is the cytoplasm. It carries out the reaction uridine(2552) in 23S rRNA + S-adenosyl-L-methionine = 2'-O-methyluridine(2552) in 23S rRNA + S-adenosyl-L-homocysteine + H(+). Its function is as follows. Specifically methylates the uridine in position 2552 of 23S rRNA at the 2'-O position of the ribose in the fully assembled 50S ribosomal subunit. The sequence is that of Ribosomal RNA large subunit methyltransferase E from Pseudomonas aeruginosa (strain UCBPP-PA14).